The chain runs to 89 residues: Cell division topological specificity factor (89 aa).

This sequence belongs to the MinE family.

Its function is as follows. Prevents the cell division inhibition by proteins MinC and MinD at internal division sites while permitting inhibition at polar sites. This ensures cell division at the proper site by restricting the formation of a division septum at the midpoint of the long axis of the cell. The chain is Cell division topological specificity factor from Legionella pneumophila (strain Paris).